Here is a 675-residue protein sequence, read N- to C-terminus: Methionine--tRNA ligase (675 aa).

The 'HIGH' region motif lies at 15-25; that stretch reads PYANGSIHLGH. Zn(2+) is bound by residues Cys-146, Cys-149, Cys-159, and Cys-162. The 'KMSKS' region signature appears at 332–336; it reads KMSKS. Lys-335 provides a ligand contact to ATP. The region spanning 574-675 is the tRNA-binding domain; the sequence is DFAKLDLRIA…AGAKPGMRVK (102 aa).

This sequence belongs to the class-I aminoacyl-tRNA synthetase family. MetG type 1 subfamily. As to quaternary structure, homodimer. Requires Zn(2+) as cofactor.

The protein resides in the cytoplasm. It carries out the reaction tRNA(Met) + L-methionine + ATP = L-methionyl-tRNA(Met) + AMP + diphosphate. Its function is as follows. Is required not only for elongation of protein synthesis but also for the initiation of all mRNA translation through initiator tRNA(fMet) aminoacylation. This chain is Methionine--tRNA ligase, found in Tolumonas auensis (strain DSM 9187 / NBRC 110442 / TA 4).